The following is a 208-amino-acid chain: Ras-related protein Rab-6A (208 aa).

An N-acetylserine modification is found at S2. 10 residues coordinate GTP: S23, V24, G25, K26, T27, S28, D39, N40, Y42, and T45. T27 contacts Mg(2+). Residues 32-50 (RFMYDSFDNTYQATIGIDF) carry the Switch 1 motif. Residues T45 and D68 each contribute to the Mg(2+) site. The short motif at 69–88 (TAGQERFRSLIPSYIRDSTV) is the Switch 2 element. GTP contacts are provided by G71, N126, K127, D129, S156, A157, and K158. At S184 the chain carries Phosphoserine. Residues C206 and C208 are each lipidated (S-geranylgeranyl cysteine). Cysteine methyl ester is present on C208.

This sequence belongs to the small GTPase superfamily. Rab family. In terms of assembly, interacts with BICDL1; leads to its accumulation in the pericentrosomal region. Interacts with SCYL1BP1. Interacts with VSP52. Interacts with RABGAP1. Interacts with GCC2 (via its GRIP domain). Interacts with RAB6IP1 (via its RUN 1 domain). Interacts with TMF1. Interacts with CIMAP3. Interacts (GTP-bound) with APBA1/MINT1 isoform 3, also called Mint1_826, but not with isoform 1. Interacts with RIC1; the interaction is direct with a preference for RAB6A-GDP. Interacts with RGP1; the interaction is direct with a preference for RAB6A-GDP. Interacts (GTP-bound) with DYNLRB1; the interaction is direct. Interacts with BICD1. Interacts with BICD2; the interaction is direct. Interacts (GTP-bound) with VPS13B. As to quaternary structure, interacts with BICD1. Interacts (GDP-bound) with DYNLRB1; the interaction is direct. Interacts (GTP-bound) with VPS13B. Mg(2+) serves as cofactor. In terms of processing, prenylated.

The protein resides in the golgi apparatus membrane. The protein localises to the cytoplasmic vesicle. Its subcellular location is the secretory vesicle. It is found in the acrosome membrane. The enzyme catalyses GTP + H2O = GDP + phosphate + H(+). With respect to regulation, regulated by guanine nucleotide exchange factors (GEFs) which promote the exchange of bound GDP for free GTP. Regulated by GTPase activating proteins (GAPs) which increase the GTP hydrolysis activity. Inhibited by GDP dissociation inhibitors (GDIs). Its function is as follows. The small GTPases Rab are key regulators of intracellular membrane trafficking, from the formation of transport vesicles to their fusion with membranes. Rabs cycle between an inactive GDP-bound form and an active GTP-bound form that is able to recruit to membranes different sets of downstream effectors directly responsible for vesicle formation, movement, tethering and fusion. RAB6A acts as a regulator of COPI-independent retrograde transport from the Golgi apparatus towards the endoplasmic reticulum (ER). Has a low GTPase activity. Recruits VPS13B to the Golgi membrane. Plays a role in neuron projection development. This Mus musculus (Mouse) protein is Ras-related protein Rab-6A.